We begin with the raw amino-acid sequence, 147 residues long: Large ribosomal subunit protein uL15 (147 aa).

The segment at 1–54 is disordered; it reads MKLFELQPAPGSKKLPNRKGRGIGSGNGKTGGRGHKGQNARAGGGVRPGFEGGQ. 2 stretches are compositionally biased toward gly residues: residues 22–31 and 42–52; these read GIGSGNGKTG and AGGGVRPGFEG.

The protein belongs to the universal ribosomal protein uL15 family. In terms of assembly, part of the 50S ribosomal subunit.

Binds to the 23S rRNA. This chain is Large ribosomal subunit protein uL15, found in Ruminiclostridium cellulolyticum (strain ATCC 35319 / DSM 5812 / JCM 6584 / H10) (Clostridium cellulolyticum).